A 212-amino-acid chain; its full sequence is External core antigen (212 aa).

The signal sequence occupies residues 1-19 (MQLFHLCLIISCSCPTVQA). The HBEAG stretch occupies residues 25–27 (GWL). The segment at 172–212 (LPETAVVRRRGRSPRRRTPSPRRRRSQSPRRRRSQSPASQC) is disordered. The span at 178–205 (VRRRGRSPRRRTPSPRRRRSQSPRRRRS) shows a compositional bias: basic residues. Residues 184-190 (SPRRRTP) form a 1; half-length repeat. The 3 X 8 AA repeats of S-P-R-R-R-R-S-Q stretch occupies residues 184-206 (SPRRRTPSPRRRRSQSPRRRRSQ). The propeptide occupies 184–212 (SPRRRTPSPRRRRSQSPRRRRSQSPASQC). Repeat copies occupy residues 191 to 198 (SPRRRRSQ) and 199 to 206 (SPRRRRSQ).

Belongs to the orthohepadnavirus precore antigen family. In terms of assembly, homodimerizes. Phosphorylated. Post-translationally, cleaved by host furin.

The protein localises to the secreted. Its subcellular location is the host nucleus. In terms of biological role, may regulate immune response to the intracellular capsid in acting as a T-cell tolerogen, by having an immunoregulatory effect which prevents destruction of infected cells by cytotoxic T-cells. This immune regulation may predispose to chronicity during perinatal infections and prevent severe liver injury during adult infections. The sequence is that of External core antigen from Gorilla gorilla (western gorilla).